The primary structure comprises 286 residues: Light-independent protochlorophyllide reductase iron-sulfur ATP-binding protein (286 aa).

ATP-binding positions include Gly10–Thr15 and Lys39. Position 14 (Ser14) interacts with Mg(2+). The [4Fe-4S] cluster site is built by Cys95 and Cys129. Asn180–Arg181 provides a ligand contact to ATP.

Belongs to the NifH/BchL/ChlL family. As to quaternary structure, homodimer. Protochlorophyllide reductase is composed of three subunits; ChlL, ChlN and ChlB. It depends on [4Fe-4S] cluster as a cofactor.

It carries out the reaction chlorophyllide a + oxidized 2[4Fe-4S]-[ferredoxin] + 2 ADP + 2 phosphate = protochlorophyllide a + reduced 2[4Fe-4S]-[ferredoxin] + 2 ATP + 2 H2O. Its pathway is porphyrin-containing compound metabolism; chlorophyll biosynthesis (light-independent). Functionally, component of the dark-operative protochlorophyllide reductase (DPOR) that uses Mg-ATP and reduced ferredoxin to reduce ring D of protochlorophyllide (Pchlide) to form chlorophyllide a (Chlide). This reaction is light-independent. The L component serves as a unique electron donor to the NB-component of the complex, and binds Mg-ATP. This chain is Light-independent protochlorophyllide reductase iron-sulfur ATP-binding protein, found in Synechococcus elongatus (strain ATCC 33912 / PCC 7942 / FACHB-805) (Anacystis nidulans R2).